The sequence spans 155 residues: 1,4-dihydroxy-2-naphthoyl-CoA hydrolase (155 aa).

Aspartate 27 is a catalytic residue.

The protein belongs to the 4-hydroxybenzoyl-CoA thioesterase family. DHNA-CoA hydrolase subfamily.

It carries out the reaction 1,4-dihydroxy-2-naphthoyl-CoA + H2O = 1,4-dihydroxy-2-naphthoate + CoA + H(+). It functions in the pathway cofactor biosynthesis; phylloquinone biosynthesis. Its pathway is quinol/quinone metabolism; 1,4-dihydroxy-2-naphthoate biosynthesis; 1,4-dihydroxy-2-naphthoate from chorismate: step 7/7. In terms of biological role, catalyzes the hydrolysis of 1,4-dihydroxy-2-naphthoyl-CoA (DHNA-CoA) to 1,4-dihydroxy-2-naphthoate (DHNA), a reaction involved in phylloquinone (vitamin K1) biosynthesis. The chain is 1,4-dihydroxy-2-naphthoyl-CoA hydrolase from Prochlorococcus marinus (strain NATL2A).